A 463-amino-acid chain; its full sequence is Zinc finger protein interacting with ribonucleoprotein K (463 aa).

The 76-residue stretch at 14-89 (VTFQDVAICF…PKTNLCEKCV (76 aa)) folds into the KRAB domain. Disordered stretches follow at residues 106 to 128 (HSTE…KPLE) and 171 to 211 (KYRK…TSNG). Positions 174 to 191 (KSTEGRKETSHESDKSEE) are enriched in basic and acidic residues. Polar residues predominate over residues 192–201 (CQSLSSQKQT). C2H2-type zinc fingers lie at residues 215 to 237 (YECS…QRVH), 243 to 265 (WECR…RRIH), 271 to 293 (YECS…QKTH), 299 to 321 (YECS…KRVH), 327 to 349 (YKCS…RRIH), 355 to 377 (YECR…QRVH), 383 to 405 (YKCS…RRIH), 411 to 433 (YECS…QVVH), and 439 to 461 (YECD…QKCH).

This sequence belongs to the krueppel C2H2-type zinc-finger protein family. In terms of assembly, interacts with HNRPK. Expressed in ovary and liver, and at lower levels in brain and muscle.

The protein resides in the nucleus. In terms of biological role, may be a transcriptional repressor. This chain is Zinc finger protein interacting with ribonucleoprotein K (Zik1), found in Mus musculus (Mouse).